A 35-amino-acid chain; its full sequence is Photosystem II reaction center protein T (35 aa).

Residues 3-23 traverse the membrane as a helical segment; sequence SVAYILIFTLCIGTIFFAIAF.

Belongs to the PsbT family. In terms of assembly, PSII is composed of 1 copy each of membrane proteins PsbA, PsbB, PsbC, PsbD, PsbE, PsbF, PsbH, PsbI, PsbJ, PsbK, PsbL, PsbM, PsbT, PsbX, PsbY, PsbZ, Psb30/Ycf12, peripheral proteins PsbO, CyanoQ (PsbQ), PsbU, PsbV and a large number of cofactors. It forms dimeric complexes.

The protein localises to the cellular thylakoid membrane. Functionally, found at the monomer-monomer interface of the photosystem II (PS II) dimer, plays a role in assembly and dimerization of PSII. PSII is a light-driven water plastoquinone oxidoreductase, using light energy to abstract electrons from H(2)O, generating a proton gradient subsequently used for ATP formation. This chain is Photosystem II reaction center protein T, found in Nostoc punctiforme (strain ATCC 29133 / PCC 73102).